We begin with the raw amino-acid sequence, 124 residues long: MKKTKKRKQSITLVEMMVVITLIGIIGGALAFNMRGSLQKGKIFQTEQNCARVYDVLMMEYASGNLSLKEVIANKEAILEDSAWCKEGKKLLKDAWGEDLLVKMNDKGDDIVVFSKKVRNEQRG.

Positions 1 to 31 (MKKTKKRKQSITLVEMMVVITLIGIIGGALA) are cleaved as a signal peptide.

It is found in the cell outer membrane. The sequence is that of Putative outer membrane protein CT_569 from Chlamydia trachomatis serovar D (strain ATCC VR-885 / DSM 19411 / UW-3/Cx).